A 324-amino-acid chain; its full sequence is ATP-dependent 6-phosphofructokinase (324 aa).

An ATP-binding site is contributed by glycine 11. Position 21-25 (21-25 (RAVVR)) interacts with ADP. Residues 72–73 (RE) and 102–105 (GNGS) each bind ATP. Asparagine 103 is a binding site for Mg(2+). 126–128 (TID) serves as a coordination point for substrate. The active-site Proton acceptor is aspartate 128. Arginine 155 serves as a coordination point for ADP. Substrate contacts are provided by residues arginine 163 and 170 to 172 (MGR). ADP is bound by residues 186 to 188 (GAD), arginine 212, and 214 to 216 (KKF). Residues glutamate 223, arginine 248, and 254 to 257 (YIQR) each bind substrate.

The protein belongs to the phosphofructokinase type A (PFKA) family. ATP-dependent PFK group I subfamily. Prokaryotic clade 'B1' sub-subfamily. As to quaternary structure, homotetramer. It depends on Mg(2+) as a cofactor.

It is found in the cytoplasm. It carries out the reaction beta-D-fructose 6-phosphate + ATP = beta-D-fructose 1,6-bisphosphate + ADP + H(+). It participates in carbohydrate degradation; glycolysis; D-glyceraldehyde 3-phosphate and glycerone phosphate from D-glucose: step 3/4. Allosterically activated by ADP and other diphosphonucleosides, and allosterically inhibited by phosphoenolpyruvate. Catalyzes the phosphorylation of D-fructose 6-phosphate to fructose 1,6-bisphosphate by ATP, the first committing step of glycolysis. This Persephonella marina (strain DSM 14350 / EX-H1) protein is ATP-dependent 6-phosphofructokinase.